We begin with the raw amino-acid sequence, 310 residues long: Junctional adhesion molecule C (310 aa).

A signal peptide spans 1 to 31 (MALRRPPRLRLCARLPDFFLLLLFRGCLIGA). Residues 32–241 (VNLKSSNRTP…EQEMEVYDLN (210 aa)) are Extracellular-facing. In terms of domain architecture, Ig-like V-type spans 35–127 (KSSNRTPVVQ…VARNDRKEID (93 aa)). Intrachain disulfides connect Cys-53/Cys-115 and Cys-160/Cys-219. N-linked (GlcNAc...) asparagine glycans are attached at residues Asn-104 and Asn-192. The Ig-like C2-type domain occupies 139–236 (PVTPVCRVPK…SARCEEQEME (98 aa)). Residues 242 to 262 (IGGIIGGVLVVLAVLALITLG) traverse the membrane as a helical segment. The Cytoplasmic portion of the chain corresponds to 263-310 (ICCAYRRGYFINNKQDGESYKNPGKPDGVNYIRTDEEGDFRHKSSFVI). 2 S-palmitoyl cysteine lipidation sites follow: Cys-264 and Cys-265.

The protein belongs to the immunoglobulin superfamily. In terms of assembly, interacts with ITGAM. Interacts with GORASP2. Proteolytically cleaved from endothelial cells surface into a soluble form by ADAM10 and ADAM17; the release of soluble JAM3 is increased by pro-inflammatory factors. In terms of processing, S-palmitoylated by ZDHHC7. S-palmitoylation promotes expression at tight junctions. Detected on round and elongated spermatids (at protein level). Highest expression in placenta, brain and kidney. Significant expression is detected on platelets. Expressed in intestinal mucosa cells. Expressed in the vascular endothelium. Found in serum (at protein level). Also detected in the synovial fluid of patients with rheumatoid arthritis, psoriatic arthritis or ostearthritis (at protein level).

It localises to the cell membrane. The protein localises to the cell junction. Its subcellular location is the desmosome. The protein resides in the tight junction. It is found in the secreted. In terms of biological role, junctional adhesion protein that mediates heterotypic cell-cell interactions with its cognate receptor JAM2 to regulate different cellular processes. Plays a role in homing and mobilization of hematopoietic stem and progenitor cells within the bone marrow. At the surface of bone marrow stromal cells, it contributes to the retention of the hematopoietic stem and progenitor cells expressing JAM3. Plays a central role in leukocytes extravasation by facilitating transmigration through the endothelium. Plays a role in spermatogenesis where JAM2 and JAM3, which are respectively expressed by Sertoli and germ cells, mediate an interaction between both cell types and play an essential role in the anchorage of germ cells onto Sertoli cells and the assembly of cell polarity complexes during spermatid differentiation. Also functions as a counter-receptor for ITGAM, mediating leukocyte-platelet interactions and is involved in the regulation of transepithelial migration of polymorphonuclear neutrophils (PMN). Plays a role in angiogenesis. Plays a role in the regulation of cell migration. During myogenesis, it is involved in myocyte fusion. Promotes chemotaxis of vascular endothelial cells and stimulates angiogenesis. The protein is Junctional adhesion molecule C (JAM3) of Homo sapiens (Human).